The primary structure comprises 561 residues: 4-coumarate--CoA ligase 1 (561 aa).

Ser210, Ser211, Gly212, Thr213, Thr214, and Lys218 together coordinate ATP. Residues Tyr260 and Ser264 each contribute to the (E)-4-coumaroyl-AMP site. Lys281 provides a ligand contact to CoA. Residues 283–352 are SBD1; sequence EINLLLELIQ…AKFPNAKLGQ (70 aa). (E)-4-coumaroyl-AMP-binding residues include Ala330, Gln352, Gly353, Thr357, and Met365. Positions 352, 353, and 357 each coordinate ATP. The SBD2 stretch occupies residues 353 to 420; it reads GYGMTEAGPV…IRGHQIMKGY (68 aa). ATP contacts are provided by Asp441 and Arg456. Lys458 and Lys462 together coordinate (E)-4-coumaroyl-AMP. Residues Lys464 and Gly465 each contribute to the CoA site. Lys547 is an ATP binding site.

This sequence belongs to the ATP-dependent AMP-binding enzyme family. The cofactor is Mg(2+). As to expression, preferentially expressed in roots, bolting stems and siliques. Also detected in leaves.

The enzyme catalyses (E)-4-coumarate + ATP + CoA = (E)-4-coumaroyl-CoA + AMP + diphosphate. It carries out the reaction (E)-caffeate + ATP + CoA = (E)-caffeoyl-CoA + AMP + diphosphate. It catalyses the reaction (E)-ferulate + ATP + CoA = (E)-feruloyl-CoA + AMP + diphosphate. The catalysed reaction is (E)-4-coumarate + ATP + H(+) = (E)-4-coumaroyl-AMP + diphosphate. The enzyme catalyses (E)-4-coumaroyl-AMP + CoA = (E)-4-coumaroyl-CoA + AMP + H(+). It carries out the reaction (E)-caffeate + ATP + H(+) = (E)-caffeoyl-AMP + diphosphate. It catalyses the reaction (E)-caffeoyl-AMP + CoA = (E)-caffeoyl-CoA + AMP + H(+). The catalysed reaction is (E)-ferulate + ATP + H(+) = (E)-feruloyl-AMP + diphosphate. The enzyme catalyses (E)-feruloyl-AMP + CoA = (E)-feruloyl-CoA + AMP + H(+). The protein operates within phytoalexin biosynthesis; 3,4',5-trihydroxystilbene biosynthesis; 3,4',5-trihydroxystilbene from trans-4-coumarate: step 1/2. Functionally, produces CoA thioesters of a variety of hydroxy- and methoxy-substituted cinnamic acids, which are used to synthesize several phenylpropanoid-derived compounds, including anthocyanins, flavonoids, isoflavonoids, coumarins, lignin, suberin and wall-bound phenolics. Follows a two-step reaction mechanism, wherein the carboxylate substrate first undergoes adenylation by ATP, followed by a thioesterification in the presence of CoA to yield the final CoA thioesters. In Arabidopsis thaliana (Mouse-ear cress), this protein is 4-coumarate--CoA ligase 1.